We begin with the raw amino-acid sequence, 248 residues long: 1-(5-phosphoribosyl)-5-[(5-phosphoribosylamino)methylideneamino] imidazole-4-carboxamide isomerase (248 aa).

Asp-8 (proton acceptor) is an active-site residue. Residue Asp-130 is the Proton donor of the active site.

Belongs to the HisA/HisF family.

The protein resides in the cytoplasm. The enzyme catalyses 1-(5-phospho-beta-D-ribosyl)-5-[(5-phospho-beta-D-ribosylamino)methylideneamino]imidazole-4-carboxamide = 5-[(5-phospho-1-deoxy-D-ribulos-1-ylimino)methylamino]-1-(5-phospho-beta-D-ribosyl)imidazole-4-carboxamide. Its pathway is amino-acid biosynthesis; L-histidine biosynthesis; L-histidine from 5-phospho-alpha-D-ribose 1-diphosphate: step 4/9. The protein is 1-(5-phosphoribosyl)-5-[(5-phosphoribosylamino)methylideneamino] imidazole-4-carboxamide isomerase of Alkalilimnicola ehrlichii (strain ATCC BAA-1101 / DSM 17681 / MLHE-1).